A 154-amino-acid chain; its full sequence is Large ribosomal subunit protein uL30 (154 aa).

The protein belongs to the universal ribosomal protein uL30 family. Part of the 50S ribosomal subunit.

The chain is Large ribosomal subunit protein uL30 from Methanocaldococcus jannaschii (strain ATCC 43067 / DSM 2661 / JAL-1 / JCM 10045 / NBRC 100440) (Methanococcus jannaschii).